The primary structure comprises 36 residues: Photosystem I reaction center subunit VIII (36 aa).

Residues isoleucine 9 to tyrosine 29 traverse the membrane as a helical segment.

Belongs to the PsaI family.

It is found in the plastid. The protein localises to the chloroplast thylakoid membrane. In terms of biological role, may help in the organization of the PsaL subunit. This Tupiella akineta (Green alga) protein is Photosystem I reaction center subunit VIII.